The following is a 345-amino-acid chain: Glycerol-3-phosphate dehydrogenase [NAD(P)+] (345 aa).

NADPH contacts are provided by Ser23, Tyr24, His44, and Lys118. Sn-glycerol 3-phosphate contacts are provided by Lys118, Gly147, and Thr149. Residue Ala151 coordinates NADPH. Sn-glycerol 3-phosphate contacts are provided by Lys203, Asp256, Ser266, Arg267, and Asn268. Residue Lys203 is the Proton acceptor of the active site. Position 267 (Arg267) interacts with NADPH. The NADPH site is built by Val291 and Glu293.

It belongs to the NAD-dependent glycerol-3-phosphate dehydrogenase family.

Its subcellular location is the cytoplasm. It catalyses the reaction sn-glycerol 3-phosphate + NAD(+) = dihydroxyacetone phosphate + NADH + H(+). The catalysed reaction is sn-glycerol 3-phosphate + NADP(+) = dihydroxyacetone phosphate + NADPH + H(+). It functions in the pathway membrane lipid metabolism; glycerophospholipid metabolism. Functionally, catalyzes the reduction of the glycolytic intermediate dihydroxyacetone phosphate (DHAP) to sn-glycerol 3-phosphate (G3P), the key precursor for phospholipid synthesis. This chain is Glycerol-3-phosphate dehydrogenase [NAD(P)+], found in Vibrio parahaemolyticus serotype O3:K6 (strain RIMD 2210633).